A 281-amino-acid chain; its full sequence is Probable endonuclease 4 (281 aa).

Zn(2+)-binding residues include histidine 69, histidine 109, glutamate 145, aspartate 179, histidine 182, histidine 216, aspartate 229, histidine 231, and glutamate 261.

Belongs to the AP endonuclease 2 family. It depends on Zn(2+) as a cofactor.

It carries out the reaction Endonucleolytic cleavage to 5'-phosphooligonucleotide end-products.. Endonuclease IV plays a role in DNA repair. It cleaves phosphodiester bonds at apurinic or apyrimidinic (AP) sites, generating a 3'-hydroxyl group and a 5'-terminal sugar phosphate. The polypeptide is Probable endonuclease 4 (Nautilia profundicola (strain ATCC BAA-1463 / DSM 18972 / AmH)).